Here is a 260-residue protein sequence, read N- to C-terminus: Phosphate import ATP-binding protein PstB (260 aa).

Residues 14–255 (IETENLSLFY…PKNTKTEEYI (242 aa)) enclose the ABC transporter domain. Position 46 to 53 (46 to 53 (GPSGCGKS)) interacts with ATP.

The protein belongs to the ABC transporter superfamily. Phosphate importer (TC 3.A.1.7) family. As to quaternary structure, the complex is composed of two ATP-binding proteins (PstB), two transmembrane proteins (PstC and PstA) and a solute-binding protein (PstS).

The protein resides in the cell inner membrane. It catalyses the reaction phosphate(out) + ATP + H2O = ADP + 2 phosphate(in) + H(+). Functionally, part of the ABC transporter complex PstSACB involved in phosphate import. Responsible for energy coupling to the transport system. This chain is Phosphate import ATP-binding protein PstB, found in Borrelia garinii subsp. bavariensis (strain ATCC BAA-2496 / DSM 23469 / PBi) (Borreliella bavariensis).